Consider the following 729-residue polypeptide: Phenylalanine ammonia-lyase (729 aa).

The Proton donor/acceptor role is filled by Tyr77. Residues 182-184 (ASG) constitute a cross-link (5-imidazolinone (Ala-Gly)). Ser183 carries the post-translational modification 2,3-didehydroalanine (Ser). 7 residues coordinate (E)-cinnamate: Asn241, Gln336, Arg342, Asn372, Lys443, Glu471, and Asn474.

Belongs to the PAL/histidase family. Post-translationally, contains an active site 4-methylidene-imidazol-5-one (MIO), which is formed autocatalytically by cyclization and dehydration of residues Ala-Ser-Gly.

It localises to the cytoplasm. The enzyme catalyses L-phenylalanine = (E)-cinnamate + NH4(+). Its pathway is secondary metabolite biosynthesis. It functions in the pathway phenylpropanoid metabolism; trans-cinnamate biosynthesis; trans-cinnamate from L-phenylalanine: step 1/1. Functionally, phenylalanine ammonia-lyase; part of the gene cluster that mediates the biosynthesis of squalestatin S1 (SQS1, also known as zaragozic acid A), a heavily oxidized fungal polyketide that offers potent cholesterol lowering activity by targeting squalene synthase (SS). SQS1 is composed of a 2,8-dioxobicyclic[3.2.1]octane-3,4,5-tricarboxyclic acid core that is connected to two lipophilic polyketide arms. These initial steps feature the priming of an unusual benzoic acid starter unit onto the highly reducing polyketide synthase pks2, followed by oxaloacetate extension and product release to generate a tricarboxylic acid containing product. The phenylalanine ammonia lyase (PAL) M7 and the acyl-CoA ligase M9 are involved in transforming phenylalanine into benzoyl-CoA. The citrate synthase-like protein R3 is involved in connecting the C-alpha-carbons of the hexaketide chain and oxaloacetate to afford the tricarboxylic acid unit. The potential hydrolytic enzymes, M8 and M10, are in close proximity to pks2 and may participate in product release. On the other side, the tetraketide arm is synthesized by a the squalestatin tetraketide synthase pks1 and enzymatically esterified to the core in the last biosynthetic step, by the acetyltransferase M4. The biosynthesis of the tetraketide must involve 3 rounds of chain extension. After the first and second rounds methyl-transfer occurs, and in all rounds of extension the ketoreductase and dehydratase are active. The enoyl reductase and C-MeT of pks1 are not active in the final round of extension. The acetyltransferase M4 appears to have a broad substrate selectivity for its acyl CoA substrate, allowing the in vitro synthesis of novel squalestatins. The biosynthesis of SQS1 requires several oxidative steps likely performed by oxidoreductases M1, R1 and R2. Finally, in support of the identification of the cluster as being responsible for SQS1 production, the cluster contains a gene encoding a putative squalene synthase (SS) R6, suggesting a likely mechanism for self-resistance. The polypeptide is Phenylalanine ammonia-lyase (Phoma sp. (strain ATCC 20986 / MF5453)).